A 1239-amino-acid chain; its full sequence is DNA-directed RNA polymerase subunit beta (1239 aa).

Positions 1182 to 1239 (IEGAENQLEDKEEKEEEKEENYKEDSDEYDDLREEDVEPDLEELSLDDLDLDDFGDEH) are disordered. Acidic residues-rich tracts occupy residues 1191 to 1200 (DKEEKEEEKE) and 1206 to 1239 (DSDE…GDEH).

It belongs to the RNA polymerase beta chain family. As to quaternary structure, the RNAP catalytic core consists of 2 alpha, 1 beta, 1 beta' and 1 omega subunit. When a sigma factor is associated with the core the holoenzyme is formed, which can initiate transcription.

The enzyme catalyses RNA(n) + a ribonucleoside 5'-triphosphate = RNA(n+1) + diphosphate. DNA-dependent RNA polymerase catalyzes the transcription of DNA into RNA using the four ribonucleoside triphosphates as substrates. In Clostridium botulinum (strain Loch Maree / Type A3), this protein is DNA-directed RNA polymerase subunit beta.